We begin with the raw amino-acid sequence, 829 residues long: Periplasmic nitrate reductase (829 aa).

Positions 1–36 (MARRDFIKQTAAAAAATVAGVPLTGYTQNIVTESEA) form a signal peptide, tat-type signal. The 4Fe-4S Mo/W bis-MGD-type domain occupies 39-95 (LKWSKAPCRFCGTGCGVNVAVKDNQVVATHGDFNAEVNKGLNCVKGYFLSKIMYGSD). [4Fe-4S] cluster-binding residues include Cys-46, Cys-49, Cys-53, and Cys-81. Mo-bis(molybdopterin guanine dinucleotide) is bound by residues Lys-83, Gln-150, Asn-175, Cys-179, 212–219 (WGSNMAEM), 243–247 (STFEH), 262–264 (QSD), Met-373, Gln-377, Asn-483, 509–510 (SD), Lys-532, Asp-559, and 719–728 (TGRVLEHWHS). A substrate-binding site is contributed by Trp-795. Mo-bis(molybdopterin guanine dinucleotide) is bound by residues Asn-803 and Lys-820.

The protein belongs to the prokaryotic molybdopterin-containing oxidoreductase family. NasA/NapA/NarB subfamily. In terms of assembly, component of the periplasmic nitrate reductase NapAB complex composed of NapA and NapB. It depends on [4Fe-4S] cluster as a cofactor. The cofactor is Mo-bis(molybdopterin guanine dinucleotide). Predicted to be exported by the Tat system. The position of the signal peptide cleavage has not been experimentally proven.

Its subcellular location is the periplasm. It carries out the reaction 2 Fe(II)-[cytochrome] + nitrate + 2 H(+) = 2 Fe(III)-[cytochrome] + nitrite + H2O. Its function is as follows. Catalytic subunit of the periplasmic nitrate reductase complex NapAB. Receives electrons from NapB and catalyzes the reduction of nitrate to nitrite. The sequence is that of Periplasmic nitrate reductase from Bordetella bronchiseptica (strain ATCC BAA-588 / NCTC 13252 / RB50) (Alcaligenes bronchisepticus).